The primary structure comprises 98 residues: C-X-C motif chemokine 10 (98 aa).

An N-terminal signal peptide occupies residues 1–21 (MNQTAILICCLIFLTLSGIQG). Arginine 26 bears the Citrulline; by PAD2 mark. 2 cysteine pairs are disulfide-bonded: cysteine 30–cysteine 57 and cysteine 32–cysteine 74.

The protein belongs to the intercrine alpha (chemokine CxC) family. As to quaternary structure, monomer, dimer, and tetramer. Interacts with CXCR3 (via N-terminus). In terms of processing, several proteases can mediate post-secretion cleavages. DPP4 cleaves CXCL10 on its N-terminal 2 amino acids leading to an antagonist form of CXCL10. This dominant negative form is capable of binding CXCR3 but does not induce signaling. MMP9 cleaves 9 amino acids instead. Mainly secreted by monocytes, endothelial cells as well as fibroblasts. Expressed by epithelial cells in thymus. Microglial cells produce CXCL10 in response to viral stimulation.

The protein resides in the secreted. Functionally, pro-inflammatory cytokine that is involved in a wide variety of processes such as chemotaxis, differentiation, and activation of peripheral immune cells, regulation of cell growth, apoptosis and modulation of angiostatic effects. Plays thereby an important role during viral infections by stimulating the activation and migration of immune cells to the infected sites. Mechanistically, binding of CXCL10 to the CXCR3 receptor activates G protein-mediated signaling and results in downstream activation of phospholipase C-dependent pathway, an increase in intracellular calcium production and actin reorganization. In turn, recruitment of activated Th1 lymphocytes occurs at sites of inflammation. Activation of the CXCL10/CXCR3 axis also plays an important role in neurons in response to brain injury for activating microglia, the resident macrophage population of the central nervous system, and directing them to the lesion site. This recruitment is an essential element for neuronal reorganization. The chain is C-X-C motif chemokine 10 (CXCL10) from Homo sapiens (Human).